A 282-amino-acid polypeptide reads, in one-letter code: MPGVTSERTASRFDAIPGPLGLASASLEGKVALVTGAGRGIGREMAMELGRRGAKVIVNYANSSESAQEVVNAIKKSGSDAVAIKANVSDVDQIVSLFDQAVKVWGKLHIVCSNSGVVSFGHVKDVTPEEFDRVFTINTRGQFFVAREAYKHLEVGGRLILMGSITGQAKGVPKHAVYSGSKGAIETFVRCMAVDFGDKKITVNAVAPGGIKTDMYHAVCREYIPGGTELDDEAVDEYASTWSPLGRVGLPIDIARCVCFLASQDGEWVNGKVLGIDGHAMM.

NADP(+) contacts are provided by isoleucine 41, asparagine 114, and arginine 147. Active-site proton donor residues include serine 164 and tyrosine 178. 4 residues coordinate NADP(+): tyrosine 178, lysine 182, isoleucine 211, and threonine 213. The active-site Lowers pKa of active site Tyr is the lysine 182.

It belongs to the short-chain dehydrogenases/reductases (SDR) family.

It functions in the pathway pigment biosynthesis; melanin biosynthesis. Functionally, trihydroxynaphthalene reductase involved the biosynthesis of dihydroxynaphthalene (DHN)-melanin, a bluish-green pigment forming a dark layer in the conidial wall that protects the conidia from UV radiations. The first step of the pathway is the production of the pentaketide 1,3,6,8-tetrahydroxynaphthalene (1,3,6,8-THN or T4HN) by the polyketide synthase PfmaE though condensation of acetyl-CoA with malonyl-CoA. T4HN is not stable and easily oxidizes into the stable form flaviolin. T4HN is also substrate of the hydroxynaphthalene reductase PfmaG to yield scytalone. The scytalone dehydratase PfmaJ then reduces scytalone to 1,3,8-THN. 1,3,8-THN is then substrate of the hydroxynaphthalene reductase PfmaI to yield vermelone. Vermelone is further converted by the multicopper oxidase PfmaD to 1,8-DHN. Finally the laccase PFICI_06862 transforms 1,8-DHN to DHN-melanin. The roles of the 5-oxoprolinase PfmaA and the proline iminopeptidase PfmaB within the cluster have not been elucidated yet. The sequence is that of Trihydroxynaphthalene reductase PfmaI from Pestalotiopsis fici (strain W106-1 / CGMCC3.15140).